A 442-amino-acid chain; its full sequence is MRRTRRPRFVLMNKMDDLNLHYRFLNWRRRIREIREVRAFRYQERFKHILVDGDTLSYHGNSGEVGCYVASRPLTKDSNYFEVSIVDSGVRGTIAVGLVPQYYSLDHQPGWLPDSVAYHADDGKLYNGRAKGRQFGSKCNSGDRIGCGIEPVSFDVQTAQIFFTKNGKRVGSTIMPMSPDGLFPAVGMHSLGEEVRLHLNAELGREDDSVMMVDSYEDEWGRLHDVRVCGTLLEYLGKGKSIVDVGLAQARHPLSTRSHYFEVEIVDPGEKCYIALGLARKDYPKNRHPGWSRGSVAYHADDGKIFHGSGVGDPFGPRCYKGDIMGCGIMFPRDYILDSEGDSDDSCDTVILSPTARAVRNVRNVMYLHQEGEEEEEEEEEEEDGEEIEPEHEGRKVVVFFTRNGKIIGKKDAVVPSGGFFPTIGMLSCGEKVKVDLHPLSG.

Residues 17-204 (DLNLHYRFLN…VRLHLNAELG (188 aa)) form the B30.2/SPRY domain. The tract at residues 371-394 (EGEEEEEEEEEEEDGEEIEPEHEG) is disordered. A compositionally biased stretch (acidic residues) spans 372–390 (GEEEEEEEEEEEDGEEIEP).

The protein is SPRY domain-containing protein 3 (SPRYD3) of Homo sapiens (Human).